We begin with the raw amino-acid sequence, 266 residues long: Putative hydro-lyase Jann_2570 (266 aa).

This sequence belongs to the D-glutamate cyclase family.

The polypeptide is Putative hydro-lyase Jann_2570 (Jannaschia sp. (strain CCS1)).